We begin with the raw amino-acid sequence, 107 residues long: MDQFQHISVVDAQEKLQQQDLNAVLVDIRDPQSFIRGHVENAFHLTNDTIVELMNEVDFEQPVLVMCYHGHSSQGAAQYLVNQGYEEVYSVDGGFEGWHKAGLPVEK.

Residues 19 to 107 form the Rhodanese domain; the sequence is QDLNAVLVDI…WHKAGLPVEK (89 aa). The active-site Cysteine persulfide intermediate is the Cys-67.

It belongs to the GlpE family.

Its subcellular location is the cytoplasm. It carries out the reaction thiosulfate + hydrogen cyanide = thiocyanate + sulfite + 2 H(+). The enzyme catalyses thiosulfate + [thioredoxin]-dithiol = [thioredoxin]-disulfide + hydrogen sulfide + sulfite + 2 H(+). Functionally, transferase that catalyzes the transfer of sulfur from thiosulfate to thiophilic acceptors such as cyanide or dithiols. May function in a CysM-independent thiosulfate assimilation pathway by catalyzing the conversion of thiosulfate to sulfite, which can then be used for L-cysteine biosynthesis. The chain is Thiosulfate sulfurtransferase GlpE from Aliivibrio fischeri (strain ATCC 700601 / ES114) (Vibrio fischeri).